The sequence spans 103 residues: Small ribosomal subunit protein uS10 (103 aa).

The protein belongs to the universal ribosomal protein uS10 family. Part of the 30S ribosomal subunit.

Functionally, involved in the binding of tRNA to the ribosomes. The chain is Small ribosomal subunit protein uS10 from Salinibacter ruber (strain DSM 13855 / M31).